Reading from the N-terminus, the 123-residue chain is Histone H2B (123 aa).

Residues 1 to 31 (MPPKTSGKAAKKAGKAQKNITKNDKKKKRKR) form a disordered region. Residue proline 2 is modified to N-methylproline; partial. An N6-succinyllysine modification is found at lysine 44. An O-linked (GlcNAc) serine glycan is attached at serine 110. N6-succinyllysine is present on residues lysine 114 and lysine 118. Lysine 118 participates in a covalent cross-link: Glycyl lysine isopeptide (Lys-Gly) (interchain with G-Cter in ubiquitin).

This sequence belongs to the histone H2B family. In terms of assembly, the nucleosome is a histone octamer containing two molecules each of H2A, H2B, H3 and H4 assembled in one H3-H4 heterotetramer and two H2A-H2B heterodimers. The octamer wraps approximately 147 bp of DNA. In terms of processing, phosphorylated by the catalytic component of the Dbf4-dependent kinase (DDK) complex Cdc7. Post-translationally, monoubiquitination of Lys-118 by Bre1 gives a specific tag for epigenetic transcriptional activation and is also prerequisite for histone H3 'Lys-4' and 'Lys-79' methylation. Deubiquitination of Lys-118 by the SAGA complex is involved in activating transcription of a large subset of genes. Methylation at Pro-2 increases upon heat shock. In terms of processing, glcNAcylation at Ser-110 promotes monoubiquitination of Lys-118. It fluctuates in response to extracellular glucose, and associates with transcribed genes.

It localises to the nucleus. It is found in the chromosome. In terms of biological role, core component of nucleosome. Nucleosomes wrap and compact DNA into chromatin, limiting DNA accessibility to the cellular machineries which require DNA as a template. Histones thereby play a central role in transcription regulation, DNA repair, DNA replication and chromosomal stability. DNA accessibility is regulated via a complex set of post-translational modifications of histones, also called histone code, and nucleosome remodeling. The sequence is that of Histone H2B (His2B) from Drosophila sechellia (Fruit fly).